Here is a 178-residue protein sequence, read N- to C-terminus: Cytidylate kinase (178 aa).

7 to 15 is an ATP binding site; it reads GLPGTGTTT.

The protein belongs to the cytidylate kinase family. Type 2 subfamily.

It localises to the cytoplasm. It carries out the reaction CMP + ATP = CDP + ADP. It catalyses the reaction dCMP + ATP = dCDP + ADP. This chain is Cytidylate kinase, found in Methanococcus maripaludis (strain C7 / ATCC BAA-1331).